A 354-amino-acid chain; its full sequence is Small ribosomal subunit biogenesis GTPase RsgA 1 (354 aa).

Over residues 1 to 24 (MAKKKKLTKGQVRRVRSNQQKRLK) the composition is skewed to basic residues. Residues 1-28 (MAKKKKLTKGQVRRVRSNQQKRLKKQEE) are disordered. Residues 113–274 (YDGLKPVAAN…LIDSPGVREF (162 aa)) form the CP-type G domain. GTP is bound by residues 160-163 (NKVD) and 214-222 (GQSGVGKSS). The Zn(2+) site is built by Cys298, Cys303, His305, and Cys311.

The protein belongs to the TRAFAC class YlqF/YawG GTPase family. RsgA subfamily. As to quaternary structure, monomer. Associates with 30S ribosomal subunit, binds 16S rRNA. Zn(2+) is required as a cofactor.

Its subcellular location is the cytoplasm. One of several proteins that assist in the late maturation steps of the functional core of the 30S ribosomal subunit. Helps release RbfA from mature subunits. May play a role in the assembly of ribosomal proteins into the subunit. Circularly permuted GTPase that catalyzes slow GTP hydrolysis, GTPase activity is stimulated by the 30S ribosomal subunit. The protein is Small ribosomal subunit biogenesis GTPase RsgA 1 of Vibrio parahaemolyticus serotype O3:K6 (strain RIMD 2210633).